The primary structure comprises 224 residues: 7-cyano-7-deazaguanine synthase (224 aa).

10–20 (LSGGLDSATVV) contacts ATP. The Zn(2+) site is built by Cys-189, Cys-199, Cys-202, and Cys-205.

It belongs to the QueC family. The cofactor is Zn(2+).

The enzyme catalyses 7-carboxy-7-deazaguanine + NH4(+) + ATP = 7-cyano-7-deazaguanine + ADP + phosphate + H2O + H(+). It functions in the pathway purine metabolism; 7-cyano-7-deazaguanine biosynthesis. In terms of biological role, catalyzes the ATP-dependent conversion of 7-carboxy-7-deazaguanine (CDG) to 7-cyano-7-deazaguanine (preQ(0)). The sequence is that of 7-cyano-7-deazaguanine synthase from Pseudomonas putida (strain ATCC 47054 / DSM 6125 / CFBP 8728 / NCIMB 11950 / KT2440).